A 118-amino-acid chain; its full sequence is MARVKRGVVARARHKKILKQAKGYYGARSRVYRVAFQAVIKAGQYAYRDRRQRKRQFRQLWIARINAAARQNDMSYSKFINGLKKASIEIDRKILADIAVFDKVAFSALVEKAKAALA.

This sequence belongs to the bacterial ribosomal protein bL20 family.

Functionally, binds directly to 23S ribosomal RNA and is necessary for the in vitro assembly process of the 50S ribosomal subunit. It is not involved in the protein synthesizing functions of that subunit. The protein is Large ribosomal subunit protein bL20 of Yersinia enterocolitica serotype O:8 / biotype 1B (strain NCTC 13174 / 8081).